Here is a 115-residue protein sequence, read N- to C-terminus: Large ribosomal subunit protein P2 (115 aa).

Residue methionine 1 is modified to N-acetylmethionine. 2 positions are modified to phosphoserine: serine 17 and serine 19. The residue at position 21 (lysine 21) is an N6-acetyllysine; alternate. At lysine 21 the chain carries N6-succinyllysine; alternate. Residues alanine 76–alanine 90 are compositionally biased toward low complexity. The interval alanine 76–aspartate 115 is disordered. Phosphoserine is present on residues serine 79 and serine 86. The span at alanine 91–glutamate 101 shows a compositional bias: basic and acidic residues. Serine 102 and serine 105 each carry phosphoserine.

Belongs to the eukaryotic ribosomal protein P1/P2 family. In terms of assembly, heterodimer with RPLP1 at the lateral ribosomal stalk of the large ribosomal subunit.

Plays an important role in the elongation step of protein synthesis. The polypeptide is Large ribosomal subunit protein P2 (RPLP2) (Equus caballus (Horse)).